Consider the following 98-residue polypeptide: MSAIDREQVAHLAELARIEMTDEELARVAGELELIVSSVASVSQAAGPDVPATSHPLPLQNVFREDVVGEMLTQEEALLNAPDSQDGKFRVPAILDGE.

It belongs to the GatC family. Heterotrimer of A, B and C subunits.

The catalysed reaction is L-glutamyl-tRNA(Gln) + L-glutamine + ATP + H2O = L-glutaminyl-tRNA(Gln) + L-glutamate + ADP + phosphate + H(+). It carries out the reaction L-aspartyl-tRNA(Asn) + L-glutamine + ATP + H2O = L-asparaginyl-tRNA(Asn) + L-glutamate + ADP + phosphate + 2 H(+). Functionally, allows the formation of correctly charged Asn-tRNA(Asn) or Gln-tRNA(Gln) through the transamidation of misacylated Asp-tRNA(Asn) or Glu-tRNA(Gln) in organisms which lack either or both of asparaginyl-tRNA or glutaminyl-tRNA synthetases. The reaction takes place in the presence of glutamine and ATP through an activated phospho-Asp-tRNA(Asn) or phospho-Glu-tRNA(Gln). The chain is Aspartyl/glutamyl-tRNA(Asn/Gln) amidotransferase subunit C from Kocuria rhizophila (strain ATCC 9341 / DSM 348 / NBRC 103217 / DC2201).